We begin with the raw amino-acid sequence, 567 residues long: Thiol:disulfide interchange protein DsbD (567 aa).

A signal peptide spans 1–19 (MAQRIFTLILLLCSTSAFA). 2 disulfides stabilise this stretch: Cys122–Cys128 and Cys185–Cys307. 7 helical membrane-spanning segments follow: residues 170-192 (ALWALLIGIGIAFTPCVLPMYPL), 212-234 (LAFIYVQGMALTYTALGLVVAAA), 246-268 (YVLIGLAIVFTLLALSMFGLFTL), 297-319 (GAIAGLICSPCTTAPLSAILLYI), 326-348 (WLGGGTLYLYALGMGLPLMLVTV), 358-380 (GPWMAHVKTAFGFVILALPVFLL), and 387-409 (AWGLRLWSLLGVAFFGWAFITSL). Residues 435–567 (QDWAFGSPSA…FSAHLHDRQP (133 aa)) enclose the Thioredoxin domain. Cys482 and Cys485 are oxidised to a cystine.

The protein belongs to the thioredoxin family. DsbD subfamily.

The protein localises to the cell inner membrane. The catalysed reaction is [protein]-dithiol + NAD(+) = [protein]-disulfide + NADH + H(+). The enzyme catalyses [protein]-dithiol + NADP(+) = [protein]-disulfide + NADPH + H(+). Required to facilitate the formation of correct disulfide bonds in some periplasmic proteins and for the assembly of the periplasmic c-type cytochromes. Acts by transferring electrons from cytoplasmic thioredoxin to the periplasm. This transfer involves a cascade of disulfide bond formation and reduction steps. The polypeptide is Thiol:disulfide interchange protein DsbD (Salmonella typhimurium (strain LT2 / SGSC1412 / ATCC 700720)).